The primary structure comprises 291 residues: 4-hydroxy-tetrahydrodipicolinate synthase (291 aa).

Thr45 is a pyruvate binding site. Residue Tyr131 is the Proton donor/acceptor of the active site. The active-site Schiff-base intermediate with substrate is the Lys159. Ile202 serves as a coordination point for pyruvate.

The protein belongs to the DapA family. Homotetramer; dimer of dimers.

The protein resides in the cytoplasm. It carries out the reaction L-aspartate 4-semialdehyde + pyruvate = (2S,4S)-4-hydroxy-2,3,4,5-tetrahydrodipicolinate + H2O + H(+). Its pathway is amino-acid biosynthesis; L-lysine biosynthesis via DAP pathway; (S)-tetrahydrodipicolinate from L-aspartate: step 3/4. Its function is as follows. Catalyzes the condensation of (S)-aspartate-beta-semialdehyde [(S)-ASA] and pyruvate to 4-hydroxy-tetrahydrodipicolinate (HTPA). This is 4-hydroxy-tetrahydrodipicolinate synthase from Methanosarcina mazei (strain ATCC BAA-159 / DSM 3647 / Goe1 / Go1 / JCM 11833 / OCM 88) (Methanosarcina frisia).